The following is a 316-amino-acid chain: Endochitinase WIN8 (316 aa).

The N-terminal stretch at 1-23 is a signal peptide; sequence MRFWALTVLSLLLSLLLGVSSDT. The region spanning 24-64 is the Chitin-binding type-1 domain; the sequence is AQCGSQAGNATCPNDLCCSSGGYCGLTVAYCCAGCVSQCRN. 7 disulfides stabilise this stretch: C26–C41, C35–C47, C40–C54, C58–C62, C84–C146, C158–C168, and C266–C298. The Proton donor role is filled by E128.

It belongs to the glycosyl hydrolase 19 family. Chitinase class I subfamily.

The catalysed reaction is Random endo-hydrolysis of N-acetyl-beta-D-glucosaminide (1-&gt;4)-beta-linkages in chitin and chitodextrins.. In terms of biological role, defense against chitin-containing fungal pathogens. The protein is Endochitinase WIN8 (WIN8) of Populus trichocarpa (Western balsam poplar).